A 433-amino-acid polypeptide reads, in one-letter code: Small ribosomal subunit biogenesis GTPase RsgA 1, mitochondrial (433 aa).

The tract at residues 1–20 is disordered; that stretch reads MLRAKHIGKNYSSSLSPVLS. Positions 113–291 constitute a CP-type G domain; that stretch reads SEILDPPVAN…LADTPGFNQP (179 aa). 212–220 provides a ligand contact to GTP; sequence GPSGVGKSS. Zn(2+) is bound by residues C317, C322, H324, and C330.

Belongs to the TRAFAC class YlqF/YawG GTPase family. RsgA subfamily. As to quaternary structure, monomer. Associates with 30S ribosomal subunit, binds 16S rRNA. Zn(2+) serves as cofactor.

Its subcellular location is the mitochondrion. In terms of biological role, one of several proteins that assist in the late maturation steps of the functional core of the 30S ribosomal subunit. Helps release RbfA from mature subunits. May play a role in the assembly of ribosomal proteins into the subunit. Circularly permuted GTPase that catalyzes slow GTP hydrolysis, GTPase activity is stimulated by the 30S ribosomal subunit. Required for embryo development. This chain is Small ribosomal subunit biogenesis GTPase RsgA 1, mitochondrial, found in Arabidopsis thaliana (Mouse-ear cress).